A 359-amino-acid chain; its full sequence is 1-deoxy-D-xylulose 5-phosphate reductoisomerase (359 aa).

Threonine 12, glycine 13, serine 14, isoleucine 15, lysine 38, and asparagine 39 together coordinate NADPH. Residue lysine 105 coordinates 1-deoxy-D-xylulose 5-phosphate. NADPH is bound at residue glutamate 106. Aspartate 130 lines the Mn(2+) pocket. 1-deoxy-D-xylulose 5-phosphate is bound by residues serine 131, glutamate 132, serine 152, and histidine 175. A Mn(2+)-binding site is contributed by glutamate 132. An NADPH-binding site is contributed by glycine 181. 1-deoxy-D-xylulose 5-phosphate-binding residues include serine 188, asparagine 193, lysine 194, and glutamate 197. Glutamate 197 provides a ligand contact to Mn(2+).

This sequence belongs to the DXR family. Mg(2+) serves as cofactor. Requires Mn(2+) as cofactor.

The catalysed reaction is 2-C-methyl-D-erythritol 4-phosphate + NADP(+) = 1-deoxy-D-xylulose 5-phosphate + NADPH + H(+). It participates in isoprenoid biosynthesis; isopentenyl diphosphate biosynthesis via DXP pathway; isopentenyl diphosphate from 1-deoxy-D-xylulose 5-phosphate: step 1/6. Catalyzes the NADPH-dependent rearrangement and reduction of 1-deoxy-D-xylulose-5-phosphate (DXP) to 2-C-methyl-D-erythritol 4-phosphate (MEP). The polypeptide is 1-deoxy-D-xylulose 5-phosphate reductoisomerase (Pseudothermotoga lettingae (strain ATCC BAA-301 / DSM 14385 / NBRC 107922 / TMO) (Thermotoga lettingae)).